A 141-amino-acid polypeptide reads, in one-letter code: Nucleoside diphosphate kinase (141 aa).

6 residues coordinate ATP: Lys11, Phe59, Arg87, Thr93, Arg104, and Asn114. The Pros-phosphohistidine intermediate role is filled by His117.

Belongs to the NDK family. As to quaternary structure, homotetramer. It depends on Mg(2+) as a cofactor.

It is found in the cytoplasm. It catalyses the reaction a 2'-deoxyribonucleoside 5'-diphosphate + ATP = a 2'-deoxyribonucleoside 5'-triphosphate + ADP. The catalysed reaction is a ribonucleoside 5'-diphosphate + ATP = a ribonucleoside 5'-triphosphate + ADP. Functionally, major role in the synthesis of nucleoside triphosphates other than ATP. The ATP gamma phosphate is transferred to the NDP beta phosphate via a ping-pong mechanism, using a phosphorylated active-site intermediate. The sequence is that of Nucleoside diphosphate kinase from Polynucleobacter asymbioticus (strain DSM 18221 / CIP 109841 / QLW-P1DMWA-1) (Polynucleobacter necessarius subsp. asymbioticus).